The chain runs to 360 residues: Uptake hydrogenase small subunit (360 aa).

Residues 1-43 constitute a signal peptide (tat-type signal); that stretch reads MVETFYEVMRRQGISRRSFLKYCSLTATSLGLGPSFLPQIAHA. Residues cysteine 60, cysteine 63, cysteine 158, cysteine 192, histidine 230, cysteine 233, cysteine 258, and cysteine 264 each coordinate [4Fe-4S] cluster. [3Fe-4S] cluster-binding residues include cysteine 273, cysteine 292, and cysteine 295.

It belongs to the [NiFe]/[NiFeSe] hydrogenase small subunit family. In terms of assembly, heterodimer of a large and a small subunit. [4Fe-4S] cluster serves as cofactor. The cofactor is [3Fe-4S] cluster. Predicted to be exported by the Tat system. The position of the signal peptide cleavage has been experimentally proven.

It is found in the cell membrane. The catalysed reaction is H2 + A = AH2. In terms of biological role, this enzyme recycles the H(2) produced by nitrogenase to increase the production of ATP and to protect nitrogenase against inhibition or damage by O(2) under carbon- or phosphate-limited conditions. This is Uptake hydrogenase small subunit (hoxK) from Cupriavidus necator (strain ATCC 17699 / DSM 428 / KCTC 22496 / NCIMB 10442 / H16 / Stanier 337) (Ralstonia eutropha).